A 118-amino-acid polypeptide reads, in one-letter code: UPF0102 protein Nwi_0116 (118 aa).

The protein belongs to the UPF0102 family.

This is UPF0102 protein Nwi_0116 from Nitrobacter winogradskyi (strain ATCC 25391 / DSM 10237 / CIP 104748 / NCIMB 11846 / Nb-255).